Here is a 133-residue protein sequence, read N- to C-terminus: Pheromone-regulated membrane protein 3 (133 aa).

At 1–104 (MTAMKEDNAA…SKVQRENKGS (104 aa)) the chain is on the nuclear side. The interval 36 to 100 (ADGFVINKAK…DASESKVQRE (65 aa)) is disordered. A Bipartite nuclear localization signal motif is present at residues 69–75 (GRVRKHK). The segment covering 90 to 100 (KDASESKVQRE) has biased composition (basic and acidic residues). Residues 105-127 (FYQGAIFGSFLGAAVTTVLSNLA) form a helical membrane-spanning segment. At 128 to 133 (VKALQN) the chain is on the perinuclear space side.

In terms of assembly, interacts with KAR5.

The protein localises to the nucleus outer membrane. The protein resides in the cytoplasm. It localises to the cytoskeleton. It is found in the microtubule organizing center. Its subcellular location is the spindle pole body. Its function is as follows. Required for the fusion of nuclear envelopes during mating, ensuring proper karyogamy. Plays a role in the initiation of outer nuclear envelope fusion. The sequence is that of Pheromone-regulated membrane protein 3 (PRM3) from Saccharomyces cerevisiae (strain ATCC 204508 / S288c) (Baker's yeast).